A 152-amino-acid polypeptide reads, in one-letter code: Lipoprotein signal peptidase (152 aa).

Transmembrane regions (helical) follow at residues 55–75 (NKMW…VFYM) and 85–105 (LGIS…DRVF). Residues D111 and D129 contribute to the active site. Residues 124-144 (VFNIADSALCIGVVLIIIQTL) traverse the membrane as a helical segment.

The protein belongs to the peptidase A8 family.

The protein localises to the cell membrane. It carries out the reaction Release of signal peptides from bacterial membrane prolipoproteins. Hydrolyzes -Xaa-Yaa-Zaa-|-(S,diacylglyceryl)Cys-, in which Xaa is hydrophobic (preferably Leu), and Yaa (Ala or Ser) and Zaa (Gly or Ala) have small, neutral side chains.. Its pathway is protein modification; lipoprotein biosynthesis (signal peptide cleavage). In terms of biological role, this protein specifically catalyzes the removal of signal peptides from prolipoproteins. The chain is Lipoprotein signal peptidase from Bacillus cereus (strain AH187).